Consider the following 277-residue polypeptide: Myelin proteolipid protein (277 aa).

Residues Gly-2 to Arg-9 are Cytoplasmic-facing. 3 S-palmitoyl cysteine lipidation sites follow: Cys-6, Cys-7, and Cys-10. Residues Cys-10–Gly-36 form a helical membrane-spanning segment. The Extracellular portion of the chain corresponds to His-37–Asn-63. A helical transmembrane segment spans residues Val-64–Ala-88. The Cytoplasmic segment spans residues Glu-89–Lys-151. A lipid anchor (S-palmitoyl cysteine) is attached at Cys-109. Phosphoserine is present on Ser-114. Thr-116 and Thr-118 each carry phosphothreonine. Residues Cys-139 and Cys-141 are each lipidated (S-palmitoyl cysteine). A helical transmembrane segment spans residues Phe-152 to Tyr-177. The Extracellular segment spans residues Phe-178 to Phe-233. 2 disulfide bridges follow: Cys-184–Cys-228 and Cys-201–Cys-220. The O-palmitoyl serine moiety is linked to residue Ser-199. A helical transmembrane segment spans residues Gln-234 to Ala-260. Over Ala-261–Phe-277 the chain is Cytoplasmic.

The protein belongs to the myelin proteolipid protein family. As to quaternary structure, interacts with MAL.

It is found in the cell membrane. The protein resides in the myelin membrane. Its function is as follows. This is the major myelin protein from the central nervous system. It plays an important role in the formation or maintenance of the multilamellar structure of myelin. The sequence is that of Myelin proteolipid protein (Plp1) from Mus musculus (Mouse).